We begin with the raw amino-acid sequence, 93 residues long: DNA/RNA-binding protein Alba 2 (93 aa).

The protein belongs to the histone-like Alba family.

The protein localises to the cytoplasm. Its subcellular location is the chromosome. Functionally, binds double-stranded DNA tightly but without sequence specificity. Involved in DNA compaction. This chain is DNA/RNA-binding protein Alba 2, found in Methanopyrus kandleri (strain AV19 / DSM 6324 / JCM 9639 / NBRC 100938).